We begin with the raw amino-acid sequence, 346 residues long: Biotin synthase (346 aa).

The 219-residue stretch at 38–256 folds into the Radical SAM core domain; that stretch reads RQVQVSTLLS…IAVARIMMPT (219 aa). [4Fe-4S] cluster-binding residues include Cys-53, Cys-57, and Cys-60. The [2Fe-2S] cluster site is built by Cys-97, Cys-128, Cys-188, and Arg-260.

Belongs to the radical SAM superfamily. Biotin synthase family. Homodimer. The cofactor is [4Fe-4S] cluster. [2Fe-2S] cluster serves as cofactor.

It carries out the reaction (4R,5S)-dethiobiotin + (sulfur carrier)-SH + 2 reduced [2Fe-2S]-[ferredoxin] + 2 S-adenosyl-L-methionine = (sulfur carrier)-H + biotin + 2 5'-deoxyadenosine + 2 L-methionine + 2 oxidized [2Fe-2S]-[ferredoxin]. It participates in cofactor biosynthesis; biotin biosynthesis; biotin from 7,8-diaminononanoate: step 2/2. Catalyzes the conversion of dethiobiotin (DTB) to biotin by the insertion of a sulfur atom into dethiobiotin via a radical-based mechanism. This Shigella flexneri serotype 5b (strain 8401) protein is Biotin synthase.